Reading from the N-terminus, the 197-residue chain is Ribonuclease HII (197 aa).

An RNase H type-2 domain is found at 7–197 (LGIAGVDEVG…SFLRKLFATV (191 aa)). A divalent metal cation contacts are provided by D13, E14, and D109.

Belongs to the RNase HII family. The cofactor is Mn(2+). Mg(2+) serves as cofactor.

The protein localises to the cytoplasm. The enzyme catalyses Endonucleolytic cleavage to 5'-phosphomonoester.. Functionally, endonuclease that specifically degrades the RNA of RNA-DNA hybrids. This chain is Ribonuclease HII, found in Synechococcus sp. (strain CC9311).